The primary structure comprises 376 residues: UDP-N-acetylglucosamine--N-acetylmuramyl-(pentapeptide) pyrophosphoryl-undecaprenol N-acetylglucosamine transferase (376 aa).

UDP-N-acetyl-alpha-D-glucosamine is bound by residues 12 to 14, Asn-126, Arg-163, Ser-198, and Gln-296; that span reads TAG.

The protein belongs to the glycosyltransferase 28 family. MurG subfamily.

It is found in the cell membrane. The catalysed reaction is di-trans,octa-cis-undecaprenyl diphospho-N-acetyl-alpha-D-muramoyl-L-alanyl-D-glutamyl-meso-2,6-diaminopimeloyl-D-alanyl-D-alanine + UDP-N-acetyl-alpha-D-glucosamine = di-trans,octa-cis-undecaprenyl diphospho-[N-acetyl-alpha-D-glucosaminyl-(1-&gt;4)]-N-acetyl-alpha-D-muramoyl-L-alanyl-D-glutamyl-meso-2,6-diaminopimeloyl-D-alanyl-D-alanine + UDP + H(+). Its pathway is cell wall biogenesis; peptidoglycan biosynthesis. In terms of biological role, cell wall formation. Catalyzes the transfer of a GlcNAc subunit on undecaprenyl-pyrophosphoryl-MurNAc-pentapeptide (lipid intermediate I) to form undecaprenyl-pyrophosphoryl-MurNAc-(pentapeptide)GlcNAc (lipid intermediate II). In Frankia casuarinae (strain DSM 45818 / CECT 9043 / HFP020203 / CcI3), this protein is UDP-N-acetylglucosamine--N-acetylmuramyl-(pentapeptide) pyrophosphoryl-undecaprenol N-acetylglucosamine transferase.